Here is a 316-residue protein sequence, read N- to C-terminus: HPr kinase/phosphorylase (316 aa).

Residues His-141 and Lys-162 contribute to the active site. Residue Gly-156–Ser-163 coordinates ATP. Residue Ser-163 coordinates Mg(2+). Asp-180 functions as the Proton acceptor; for phosphorylation activity. Proton donor; for dephosphorylation activity in the catalytic mechanism. The interval Met-204–Asp-213 is important for the catalytic mechanism of both phosphorylation and dephosphorylation. Glu-205 provides a ligand contact to Mg(2+). Arg-246 is a catalytic residue. Positions Pro-267–Arg-272 are important for the catalytic mechanism of dephosphorylation.

Belongs to the HPrK/P family. As to quaternary structure, homohexamer. The cofactor is Mg(2+).

It carries out the reaction [HPr protein]-L-serine + ATP = [HPr protein]-O-phospho-L-serine + ADP + H(+). It catalyses the reaction [HPr protein]-O-phospho-L-serine + phosphate + H(+) = [HPr protein]-L-serine + diphosphate. Catalyzes the ATP- as well as the pyrophosphate-dependent phosphorylation of a specific serine residue in HPr, a phosphocarrier protein of the phosphoenolpyruvate-dependent sugar phosphotransferase system (PTS). HprK/P also catalyzes the pyrophosphate-producing, inorganic phosphate-dependent dephosphorylation (phosphorolysis) of seryl-phosphorylated HPr (P-Ser-HPr). The two antagonistic activities of HprK/P are regulated by several intracellular metabolites, which change their concentration in response to the absence or presence of rapidly metabolisable carbon sources (glucose, fructose, etc.) in the growth medium. Therefore, by controlling the phosphorylation state of HPr, HPrK/P is a sensor enzyme that plays a major role in the regulation of carbon metabolism and sugar transport: it mediates carbon catabolite repression (CCR), and regulates PTS-catalyzed carbohydrate uptake and inducer exclusion. This is HPr kinase/phosphorylase from Lactobacillus delbrueckii subsp. bulgaricus (strain ATCC 11842 / DSM 20081 / BCRC 10696 / JCM 1002 / NBRC 13953 / NCIMB 11778 / NCTC 12712 / WDCM 00102 / Lb 14).